The sequence spans 247 residues: Small ribosomal subunit protein uS3 (247 aa).

The KH type-2 domain maps to 51 to 119 (VAKRDKRPAG…ELHLNIVEIR (69 aa)). The span at 224 to 233 (PSAHDRRQQE) shows a compositional bias: basic and acidic residues. Residues 224–247 (PSAHDRRQQELQESGGASRPRRDR) form a disordered region.

The protein belongs to the universal ribosomal protein uS3 family. In terms of assembly, part of the 30S ribosomal subunit. Forms a tight complex with proteins S10 and S14.

Its function is as follows. Binds the lower part of the 30S subunit head. Binds mRNA in the 70S ribosome, positioning it for translation. In Jannaschia sp. (strain CCS1), this protein is Small ribosomal subunit protein uS3.